The sequence spans 261 residues: Global transcriptional regulator CodY (261 aa).

Residues 1-159 (MPNLLEKTRK…ASTVVGIQLL (159 aa)) are GAF domain. The segment at residues 207–226 (ASVIADRIGITRSVIVNALR) is a DNA-binding region (H-T-H motif).

Belongs to the CodY family.

The protein resides in the cytoplasm. DNA-binding global transcriptional regulator which is involved in the adaptive response to starvation and acts by directly or indirectly controlling the expression of numerous genes in response to nutrient availability. During rapid exponential growth, CodY is highly active and represses genes whose products allow adaptation to nutrient depletion. The chain is Global transcriptional regulator CodY from Streptococcus agalactiae serotype Ia (strain ATCC 27591 / A909 / CDC SS700).